The chain runs to 760 residues: ER membrane protein complex subunit 1 (760 aa).

A signal peptide spans 1–24; the sequence is MKITCTDLVYVFILLFLNTSCVQA. The Lumenal portion of the chain corresponds to 25–723; it reads VFSDDAFITD…PSGQFDLMSP (699 aa). Asn73, Asn106, Asn192, Asn202, Asn420, Asn443, Asn574, and Asn578 each carry an N-linked (GlcNAc...) asparagine glycan. A helical transmembrane segment spans residues 724–744; sequence TFEKGKLLITIFVLLVITYFI. Topologically, residues 745 to 760 are cytoplasmic; that stretch reads RPSVSNKKLKSQWLIK.

This sequence belongs to the EMC1 family. As to quaternary structure, component of the ER membrane protein complex (EMC), which is composed of EMC1, EMC2, EMC3, EMC4, EMC5 and EMC6. Post-translationally, N-glycosylated.

It localises to the endoplasmic reticulum membrane. Part of the endoplasmic reticulum membrane protein complex (EMC) that enables the energy-independent insertion into endoplasmic reticulum membranes of newly synthesized membrane proteins. Preferentially accommodates proteins with transmembrane domains that are weakly hydrophobic or contain destabilizing features such as charged and aromatic residues. Involved in the cotranslational insertion of multi-pass membrane proteins in which stop-transfer membrane-anchor sequences become ER membrane spanning helices. It is also required for the post-translational insertion of tail-anchored/TA proteins in endoplasmic reticulum membranes. By mediating the proper cotranslational insertion of N-terminal transmembrane domains in an N-exo topology, with translocated N-terminus in the lumen of the ER, controls the topology of multi-pass membrane proteins. The polypeptide is ER membrane protein complex subunit 1 (EMC1) (Saccharomyces cerevisiae (strain ATCC 204508 / S288c) (Baker's yeast)).